The sequence spans 432 residues: MSHNSQIQKIQAREIIDSRGNPTVEVDVTLMDGSFGRAAVPSGASTGEYEAVELRDGDKQRYLGKGVLKAVEHVNVKIQEILKGQDALDQNRVDQLMLDADGTKNKGKLGANAILGTSLAVAKAAAFHSKLPLYRYIGGNFARELPVPMMNIINGGAHADNNVDFQEFMILPVGAKNFREGLRMGAEVFHSLKSVLKGKKLNTAVGDEGGFAPDLTSNVEAIEVILQAIEKAGYKPEKDVLLGLDAASSEFYDKSKKKYVLGAENNKEFSSAELVDYYANLVSKYPIITIEDGLDENDWEGWKLLSEKLGKKIQLVGDDLFVTNIEKLSKGITSGVGNSILIKVNQIGSLSETLASIEMAKKAKYTNVVSHRSGETEDVTISHIAVATNAGQIKTGSLSRTDRIAKYNELLRIEEELGKSAVYKGKETFYNL.

Q166 contributes to the (2R)-2-phosphoglycerate binding site. E208 functions as the Proton donor in the catalytic mechanism. Mg(2+) is bound by residues D245, E291, and D318. 4 residues coordinate (2R)-2-phosphoglycerate: K343, R372, S373, and K394. The active-site Proton acceptor is K343.

The protein belongs to the enolase family. Mg(2+) serves as cofactor.

Its subcellular location is the cytoplasm. The protein localises to the secreted. It is found in the cell surface. It carries out the reaction (2R)-2-phosphoglycerate = phosphoenolpyruvate + H2O. It participates in carbohydrate degradation; glycolysis; pyruvate from D-glyceraldehyde 3-phosphate: step 4/5. Catalyzes the reversible conversion of 2-phosphoglycerate (2-PG) into phosphoenolpyruvate (PEP). It is essential for the degradation of carbohydrates via glycolysis. This is Enolase from Leptospira borgpetersenii serovar Hardjo-bovis (strain L550).